We begin with the raw amino-acid sequence, 147 residues long: Hemoglobin subunit epsilon (147 aa).

The 145-residue stretch at 3–147 folds into the Globin domain; it reads HFTAEEKAAV…VAIALAHKYH (145 aa). A phosphoserine mark is found at S14 and S51. The heme b site is built by H64 and H93.

It belongs to the globin family. Heterotetramer of two alpha chains and two epsilon chains in early embryonic hemoglobin Gower-2; two zeta chains and two epsilon chains in early embryonic hemoglobin Gower-1. As to expression, red blood cells.

Its function is as follows. The epsilon chain is a beta-type chain of early mammalian embryonic hemoglobin. This chain is Hemoglobin subunit epsilon (HBE1), found in Pongo pygmaeus (Bornean orangutan).